Here is a 231-residue protein sequence, read N- to C-terminus: ATP phosphoribosyltransferase (231 aa).

The protein belongs to the ATP phosphoribosyltransferase family. Short subfamily. As to quaternary structure, heteromultimer composed of HisG and HisZ subunits.

It localises to the cytoplasm. It catalyses the reaction 1-(5-phospho-beta-D-ribosyl)-ATP + diphosphate = 5-phospho-alpha-D-ribose 1-diphosphate + ATP. Its pathway is amino-acid biosynthesis; L-histidine biosynthesis; L-histidine from 5-phospho-alpha-D-ribose 1-diphosphate: step 1/9. Its function is as follows. Catalyzes the condensation of ATP and 5-phosphoribose 1-diphosphate to form N'-(5'-phosphoribosyl)-ATP (PR-ATP). Has a crucial role in the pathway because the rate of histidine biosynthesis seems to be controlled primarily by regulation of HisG enzymatic activity. The polypeptide is ATP phosphoribosyltransferase (hisG) (Rhizobium etli (strain ATCC 51251 / DSM 11541 / JCM 21823 / NBRC 15573 / CFN 42)).